Here is a 777-residue protein sequence, read N- to C-terminus: Serine/threonine-protein kinase PLK4 (777 aa).

Residues 14 to 268 (YEVQHLLGKG…LEQVLRHPFL (255 aa)) enclose the Protein kinase domain. ATP is bound by residues 20 to 28 (LGKGGFASV) and K43. The active-site Proton acceptor is D139. A compositionally biased stretch (polar residues) spans 371-381 (TNNLAPFTSDS). The segment at 371–390 (TNNLAPFTSDSDMIPSPVGE) is disordered. Positions 390–507 (EKRLLMPPLE…ARFVGLVKSK (118 aa)) constitute a Cryptic POLO box 1 (CPB1) domain. The region spanning 508–611 (TPKITFFSSL…GRRPAADMHA (104 aa)) is the Cryptic POLO box 2 (CPB2) domain. The POLO box domain occupies 669-748 (PIKRITVPEI…MPQLQMKLKC (80 aa)).

Belongs to the protein kinase superfamily. Ser/Thr protein kinase family. CDC5/Polo subfamily. Homodimer. In terms of processing, ubiquitinated by the SCF(Slimb) ubiquitin ligase complex; leading to its degradation by the proteasome during interphase and regulating centriole number and ensuring the block to centriole reduplication.

It localises to the cytoplasm. Its subcellular location is the cytoskeleton. The protein resides in the microtubule organizing center. It is found in the centrosome. The protein localises to the centriole. It catalyses the reaction L-seryl-[protein] + ATP = O-phospho-L-seryl-[protein] + ADP + H(+). The enzyme catalyses L-threonyl-[protein] + ATP = O-phospho-L-threonyl-[protein] + ADP + H(+). Its function is as follows. Serine/threonine-protein kinase that plays a central role in centriole duplication. Able to trigger procentriole formation on the surface of the mother centriole cylinder, using mother centriole as a platform, leading to the recruitment of centriole biogenesis proteins such as sas-6. When overexpressed, it is able to induce centrosome amplification through the simultaneous generation of multiple procentrioles adjoining each parental centriole during S phase. Centrosome amplification following overexpression can initiate tumorigenesis, highlighting the importance of centrosome regulation in cancers. The chain is Serine/threonine-protein kinase PLK4 (SAK) from Drosophila persimilis (Fruit fly).